A 316-amino-acid chain; its full sequence is Ribosomal RNA small subunit methyltransferase H (316 aa).

S-adenosyl-L-methionine contacts are provided by residues 35–37 (SGH), Asp-55, Phe-84, Asp-105, and Gln-112.

Belongs to the methyltransferase superfamily. RsmH family.

Its subcellular location is the cytoplasm. The catalysed reaction is cytidine(1402) in 16S rRNA + S-adenosyl-L-methionine = N(4)-methylcytidine(1402) in 16S rRNA + S-adenosyl-L-homocysteine + H(+). In terms of biological role, specifically methylates the N4 position of cytidine in position 1402 (C1402) of 16S rRNA. This is Ribosomal RNA small subunit methyltransferase H from Streptococcus dysgalactiae subsp. equisimilis (strain GGS_124).